We begin with the raw amino-acid sequence, 114 residues long: Iron-sulfur cluster insertion protein ErpA (114 aa).

Positions 42, 106, and 108 each coordinate iron-sulfur cluster.

It belongs to the HesB/IscA family. Homodimer. Iron-sulfur cluster is required as a cofactor.

Required for insertion of 4Fe-4S clusters for at least IspG. The chain is Iron-sulfur cluster insertion protein ErpA from Pseudoalteromonas atlantica (strain T6c / ATCC BAA-1087).